Reading from the N-terminus, the 388-residue chain is uncharacterized protein (388 aa).

Residues cysteine 18, cysteine 24, cysteine 27, and cysteine 99 each coordinate [4Fe-4S] cluster. Residues glutamine 212, glutamate 262, and asparagine 313 each coordinate S-adenosyl-L-methionine. Cysteine 343 functions as the Nucleophile in the catalytic mechanism.

It belongs to the class I-like SAM-binding methyltransferase superfamily. RNA M5U methyltransferase family.

This is an uncharacterized protein from Bdellovibrio bacteriovorus (strain ATCC 15356 / DSM 50701 / NCIMB 9529 / HD100).